A 200-amino-acid chain; its full sequence is Ribonuclease HII (200 aa).

Residues 6 to 200 enclose the RNase H type-2 domain; sequence ESIAGVDEVG…KLFAVHGSLT (195 aa). A divalent metal cation contacts are provided by Asp-12, Glu-13, and Asp-108.

This sequence belongs to the RNase HII family. Mn(2+) is required as a cofactor. Mg(2+) serves as cofactor.

The protein localises to the cytoplasm. The enzyme catalyses Endonucleolytic cleavage to 5'-phosphomonoester.. Endonuclease that specifically degrades the RNA of RNA-DNA hybrids. This is Ribonuclease HII from Prochlorococcus marinus (strain MIT 9303).